The primary structure comprises 749 residues: Pectate disaccharide-lyase (749 aa).

An N-terminal signal peptide occupies residues Met-1–Ala-26. Ca(2+) contacts are provided by Asp-538, Asp-562, Asp-563, and Asp-566. Lys-595 functions as the Proton acceptor in the catalytic mechanism.

Belongs to the polysaccharide lyase 9 family. Requires Ca(2+) as cofactor.

It is found in the secreted. The catalysed reaction is [(1-&gt;4)-alpha-D-galacturonosyl](n) = 4-(4-deoxy-alpha-D-galact-4-enuronosyl)-D-galacturonate + [(1-&gt;4)-alpha-D-galacturonosyl](n-2). Its activity is regulated as follows. Activity on pectate is nearly completely inhibited by ethyleneglycol-bis-(P-aminoethyl ether) N,N'-tetraacetic acid (EGTA), EDTA or nitrilotriacetic acid. Activity is specifically restored by the addition of Ca(2+). Functionally, exo-cleaving lyase that catalyzes the digestion of pectate. Contributes to pectate catabolism but not to bacterial virulence. In vitro can also use citrus pectin and highly methyl-esterified Link pectin as substrates. This is Pectate disaccharide-lyase from Dickeya chrysanthemi (Pectobacterium chrysanthemi).